Reading from the N-terminus, the 768-residue chain is Pentatricopeptide repeat-containing protein At4g01030, mitochondrial (768 aa).

The N-terminal 25 residues, 1–25 (MYRFLGLTIHGGLIKRGLDNSDTRV), are a transit peptide targeting the mitochondrion. PPR repeat units follow at residues 22–52 (DTRV…MPKR), 53–87 (DDLA…GAKA), 88–122 (YDST…GLES), 123–153 (NVSM…MKDR), 154–188 (NLSS…GLKP), 189–223 (DIVT…GLKP), 224–254 (STSS…ILRN), 259–289 (DVYV…MDAK), 290–324 (NIVA…GIKP), 325–359 (DAIT…GVAP), 360–394 (NVVS…GVGP), 395–429 (NAAT…NLIC), 430–460 (DAYV…IKNK), 461–495 (SLAS…GMEP), 496–526 (DAIT…MRSR), and 532–562 (TIEH…MSLK). Residues 567 to 642 (IWGAFLSSCK…QDLWSWIQID (76 aa)) form a type E motif region. The interval 643–673 (QTVHIFYAEGKTHPDEGDIYFELYKLVSEMK) is type E(+) motif. The type DYW motif stretch occupies residues 674 to 768 (KSGYVPDTSC…DGKCSCNDSW (95 aa)).

The protein belongs to the PPR family. PCMP-H subfamily.

The protein localises to the mitochondrion. This chain is Pentatricopeptide repeat-containing protein At4g01030, mitochondrial (PCMP-H65), found in Arabidopsis thaliana (Mouse-ear cress).